A 315-amino-acid chain; its full sequence is Taste receptor type 2 member 3 (315 aa).

The Extracellular portion of the chain corresponds to 1 to 5; that stretch reads MGLTD. Residues 6–26 form a helical membrane-spanning segment; it reads GVFLIVCGAQFTLGILXNGFI. Topologically, residues 27–41 are cytoplasmic; the sequence is GLVNGRSWFKTKRMS. A helical transmembrane segment spans residues 42 to 62; sequence LSDFIIATLALSRIILLCIIL. Residues 63-93 are Extracellular-facing; that stretch reads TDSFLIVFSVKEHDSGIIMQLIDVFWTFTNH. The helical transmembrane segment at 94-114 threads the bilayer; it reads LSIWFATCLGVLYCLKIASFS. Residues 115-127 lie on the Cytoplasmic side of the membrane; sequence HPTFLWLKWRVSR. Residues 128–148 form a helical membrane-spanning segment; sequence VMVWMLLGALLLSCGSTASLI. The Extracellular portion of the chain corresponds to 149–185; the sequence is NEFKLYSVLRGIEATRNVTEHFRKKRNEYYLIHVLGT. N-linked (GlcNAc...) asparagine glycosylation occurs at N165. Residues 186-206 traverse the membrane as a helical segment; sequence LWYLPPLVVSLASYFLLIFSL. Residues 207–233 lie on the Cytoplasmic side of the membrane; sequence GRHTRQMLQNSTSSRDPSTEAHKRAIR. A helical transmembrane segment spans residues 234–254; sequence IILSFFFLFLLYFLAFLIASF. The Extracellular segment spans residues 255–265; sequence GNFLPETKMAK. Residues 266–286 form a helical membrane-spanning segment; the sequence is MIGEVMTMFYPAGHSFIVILG. Topologically, residues 287–315 are cytoplasmic; the sequence is NSKLKQTFVEMLRCESGHLKPGSKGPIFS.

This sequence belongs to the G-protein coupled receptor T2R family.

The protein localises to the membrane. Gustducin-coupled receptor implicated in the perception of bitter compounds in the oral cavity and the gastrointestinal tract. Signals through PLCB2 and the calcium-regulated cation channel TRPM5. This chain is Taste receptor type 2 member 3 (TAS2R3), found in Papio hamadryas (Hamadryas baboon).